Consider the following 127-residue polypeptide: MPLIGKGNQAVGDLGEQTAADYLVKQGYRILERNFRSRGGEVDIVAKDRQGCIAFVEVKTRRSLAYGLPQLAVTQRKQHQISKGALAWISKNRLHECTARFDVIAVLLQDGSEPTIEHIPNAFDLAY.

Belongs to the UPF0102 family.

The polypeptide is UPF0102 protein Glov_2230 (Trichlorobacter lovleyi (strain ATCC BAA-1151 / DSM 17278 / SZ) (Geobacter lovleyi)).